The following is a 90-amino-acid chain: YcgL domain-containing protein YpsIP31758_2009 (90 aa).

Residues 1–85 (MLCAIYRSPK…PPESLLKMHL (85 aa)) form the YcgL domain.

This chain is YcgL domain-containing protein YpsIP31758_2009, found in Yersinia pseudotuberculosis serotype O:1b (strain IP 31758).